Consider the following 285-residue polypeptide: Probable endonuclease 4 (285 aa).

The Zn(2+) site is built by His69, His109, Glu145, Asp179, His182, His216, Asp229, His231, and Glu261.

It belongs to the AP endonuclease 2 family. Zn(2+) serves as cofactor.

The catalysed reaction is Endonucleolytic cleavage to 5'-phosphooligonucleotide end-products.. Endonuclease IV plays a role in DNA repair. It cleaves phosphodiester bonds at apurinic or apyrimidinic (AP) sites, generating a 3'-hydroxyl group and a 5'-terminal sugar phosphate. This Shigella boydii serotype 18 (strain CDC 3083-94 / BS512) protein is Probable endonuclease 4.